Reading from the N-terminus, the 1947-residue chain is MAQALLVPPGPESFRLFTRESLAAIEKRAAEEKAKKPKKEQDIDDENKPKPNSDLEAGKNLPFIYGDIPPEMVSEPLEDLDPYYVSKKTFVVLNKGKAIFRFSATSALYILTPLNPVRKIAIKILVHSLFSMLIMCTILTNCVFMTLSNPPDWTKNVEYTFTGIYTFESLIKILARGFCLEDFTFLRDPWNWLDFSVIVMAYVTEFVDLGNVSALRTFRVLRALKTISVIPGLKTIVGALIQSVKKLSDVMILTVFCLSVFALIGLQLFMGNLRNKCLQWPPSDSAFEINTTSYFNGTMDSNGTFVNVTMSTFNWKDYIADDSHFYVLDGQKDPLLCGNGSDAGQCPEGYICVKAGRNPNYGYTSFDTFSWAFLSLFRLMTQDYWENLYQLTLRAAGKTYMIFFVLVIFLGSFYLVNLILAVVAMAYEEQNQATLEEAEQKEAEFQQMLEQLKKQQEEAQAVAAASAASRDFSGIGGLGELLESSSEASKLSSKSAKEWRNRRKKRRQREHLEGNHRPEGDRFPKSESEDSVKRRSFLFSLDGNPLSGDKKLCSPHQSLLSIRGSLFSPRRNSKTSIFSFRGRAKDVGSENDFADDEHSTFEDSESRRDSLFVPHRPGERRNSNGTTTETEVRKRRLSSYQISMEMLEDSSGRQRAMSIASILTNTMEELEESRQKCPPCWYRFANVFLIWDCCDSWLKVKHLVNLIVMDPFVDLAITICIVLNTLFMAMEHYPMTEQFSSVLTVGNLVFTGIFTAEMVLKIIAMDPYYYFQEGWNIFDGIIVSLSLMELGLANVEGLSVLRSFRLLRVFKLAKSWPTLNMLIKIIGNSVGALGNLTLVLAIIVFIFAVVGMQLFGKSYKECVCKINEDCKLPRWHMNDFFHSFLIVFRVLCGEWIETMWDCMEVAGQTMCLIVFMLVMVIGNLVVLNLFLALLLSSFSSDNLAATDDDNEMNNLQIAVGRMQKGIDYVKNKIRECFRKAFFRKPKVIEIHEGNKIDSCMSNNTGVVEISKELNYLKDGNGTTSGVGTGSSVEKYVIDENDYMSFINNPSLTVTVPIAVGESDFENLNTEEFSSESELEESKEKLNATSSSEGSTVDVAPPREGEQAEIEPEEDLKPEACFTEGCIKKFPFCQVSTEEGKGKIWWNLRKTCYSIVEHNWFETFIVFMILLSSGALAFEDIYIEQRKTIKTMLEYADKVFTYIFILEMLLKWVAYGFQTYFTNAWCWLDFLIVDVSLVSLVANALGYSELGAIKSLRTLRALRPLRALSRFEGMRVVVNALVGAIPSIMNVLLVCLIFWLIFSIMGVNLFAGKFYHCVNMTTGSMFDMSEVNNFSDCQALGKQARWKNVKVNFDNVGAGYLALLQVATFKGWMDIMYAAVDSRDVKLQPVYEENLYMYLYFVIFIIFGSFFTLNLFIGVIIDNFNQQKKKFGGQDIFMTEEQKKYYNAMKKLGSKKPQKPIPRPANKFQGMVFDFVTRQVFDISIMILICLNMVTMMVETDDQSKYMTLVLSRINLVFIVLFTGEFLLKLISLRYYYFTIGWNIFDFVVVILSIVGMFLAELIEKYFVSPTLFRVIRLARIGRILRLIKGAKGIRTLLFALMMSLPALFNIGLLLFLVMFIYAIFGMSNFAYVKKEAGIDDMFNFETFGNSMICLFQITTSAGWDGLLAPILNSAPPDCDPDAIHPGSSVKGDCGNPSVGIFFFVSYIIISFLVVVNMYIAVILENFSVATEESAEPLSEDDFEMFYEVWEKFDPDATQFIEFCKLSDFAAALDPPLLIAKPNKVQLIAMDLPMVSGDRIHCLDILFAFTKRVLGESGEMDALRIQMEDRFMASNPSKVSYEPITTTLKRKQEEVSAAIIQRNYRCYLLKQRLKNISNTYDKETIKGRIVLPIKGDMVIDKLNGNSTPEKTDGSSSTTSPPSYDSVTKPDKEKFEKDKPEKESKGKEV.

Residues 1 to 128 (MAQALLVPPG…KIAIKILVHS (128 aa)) are Cytoplasmic-facing. The tract at residues 28-60 (RAAEEKAKKPKKEQDIDDENKPKPNSDLEAGKN) is disordered. A compositionally biased stretch (basic and acidic residues) spans 46-57 (ENKPKPNSDLEA). One copy of the I repeat lies at 110–455 (ILTPLNPVRK…QQMLEQLKKQ (346 aa)). The helical transmembrane segment at 129-146 (LFSMLIMCTILTNCVFMT) threads the bilayer. Residues 147-152 (LSNPPD) lie on the Extracellular side of the membrane. A helical transmembrane segment spans residues 153-174 (WTKNVEYTFTGIYTFESLIKIL). Residues 175 to 188 (ARGFCLEDFTFLRD) lie on the Cytoplasmic side of the membrane. The helical transmembrane segment at 189–206 (PWNWLDFSVIVMAYVTEF) threads the bilayer. Residues 207–213 (VDLGNVS) are Extracellular-facing. Asn211 is a glycosylation site (N-linked (GlcNAc...) asparagine). A helical transmembrane segment spans residues 214–235 (ALRTFRVLRALKTISVIPGLKT). At 236 to 249 (IVGALIQSVKKLSD) the chain is on the cytoplasmic side. Residues 250-269 (VMILTVFCLSVFALIGLQLF) form a helical membrane-spanning segment. The Extracellular segment spans residues 270–369 (MGNLRNKCLQ…NYGYTSFDTF (100 aa)). Residues Asn290, Asn296, Asn302, Asn307, and Asn339 are each glycosylated (N-linked (GlcNAc...) asparagine). Residues 370 to 386 (SWAFLSLFRLMTQDYWE) constitute an intramembrane region (pore-forming). Residues 387–397 (NLYQLTLRAAG) are Extracellular-facing. Residues 398–424 (KTYMIFFVLVIFLGSFYLVNLILAVVA) form a helical membrane-spanning segment. Residues 425–712 (MAYEEQNQAT…LVNLIVMDPF (288 aa)) lie on the Cytoplasmic side of the membrane. Phosphoserine occurs at positions 484, 485, and 486. 2 disordered regions span residues 493–529 (SKSAKEWRNRRKKRRQREHLEGNHRPEGDRFPKSESE) and 587–632 (VGSE…ETEV). A compositionally biased stretch (basic residues) spans 500–509 (RNRRKKRRQR). Basic and acidic residues-rich tracts occupy residues 510–529 (EHLEGNHRPEGDRFPKSESE) and 596–622 (DEHSTFEDSESRRDSLFVPHRPGERRN). An II repeat occupies 693–965 (CCDSWLKVKH…QIAVGRMQKG (273 aa)). The chain crosses the membrane as a helical span at residues 713–730 (VDLAITICIVLNTLFMAM). Topologically, residues 731-738 (EHYPMTEQ) are extracellular. Residues 739–763 (FSSVLTVGNLVFTGIFTAEMVLKII) traverse the membrane as a helical segment. The Cytoplasmic portion of the chain corresponds to 764-773 (AMDPYYYFQE). Residues 774-793 (GWNIFDGIIVSLSLMELGLA) traverse the membrane as a helical segment. The Extracellular portion of the chain corresponds to 794–797 (NVEG). Residues 798–816 (LSVLRSFRLLRVFKLAKSW) form a helical membrane-spanning segment. Residues 817–834 (PTLNMLIKIIGNSVGALG) lie on the Cytoplasmic side of the membrane. A helical transmembrane segment spans residues 835–855 (NLTLVLAIIVFIFAVVGMQLF). Topologically, residues 856–880 (GKSYKECVCKINEDCKLPRWHMNDF) are extracellular. Residues Cys864 and Cys870 are joined by a disulfide bond. The pore-forming intramembrane region spans 881 to 896 (FHSFLIVFRVLCGEWI). Topologically, residues 897–907 (ETMWDCMEVAG) are extracellular. Cys902 and Cys911 form a disulfide bridge. Residues 908 to 934 (QTMCLIVFMLVMVIGNLVVLNLFLALL) traverse the membrane as a helical segment. The Cytoplasmic portion of the chain corresponds to 935–1157 (LSSFSSDNLA…RKTCYSIVEH (223 aa)). Residues 1070–1113 (EEFSSESELEESKEKLNATSSSEGSTVDVAPPREGEQAEIEPEE) form a disordered region. One copy of the III repeat lies at 1140–1451 (KGKIWWNLRK…KKYYNAMKKL (312 aa)). Residues 1158 to 1178 (NWFETFIVFMILLSSGALAFE) form a helical membrane-spanning segment. At 1179 to 1190 (DIYIEQRKTIKT) the chain is on the extracellular side. A helical membrane pass occupies residues 1191–1212 (MLEYADKVFTYIFILEMLLKWV). The Cytoplasmic segment spans residues 1213–1218 (AYGFQT). A helical transmembrane segment spans residues 1219–1244 (YFTNAWCWLDFLIVDVSLVSLVANAL). Topologically, residues 1245–1253 (GYSELGAIK) are extracellular. The helical transmembrane segment at 1254–1272 (SLRTLRALRPLRALSRFEG) threads the bilayer. The Cytoplasmic portion of the chain corresponds to 1273–1285 (MRVVVNALVGAIP). Residues 1286 to 1308 (SIMNVLLVCLIFWLIFSIMGVNL) form a helical membrane-spanning segment. The Extracellular portion of the chain corresponds to 1309–1354 (FAGKFYHCVNMTTGSMFDMSEVNNFSDCQALGKQARWKNVKVNFDN). Cys1316 and Cys1336 are oxidised to a cystine. N-linked (GlcNAc...) asparagine glycosylation is found at Asn1318 and Asn1332. The segment at residues 1355–1371 (VGAGYLALLQVATFKGW) is an intramembrane region (pore-forming). The Extracellular portion of the chain corresponds to 1372–1394 (MDIMYAAVDSRDVKLQPVYEENL). A helical transmembrane segment spans residues 1395-1420 (YMYLYFVIFIIFGSFFTLNLFIGVII). Residues 1421–1478 (DNFNQQKKKFGGQDIFMTEEQKKYYNAMKKLGSKKPQKPIPRPANKFQGMVFDFVTRQ) lie on the Cytoplasmic side of the membrane. Ser1453 bears the Phosphoserine mark. An IV repeat occupies 1460-1758 (IPRPANKFQG…WEKFDPDATQ (299 aa)). A helical transmembrane segment spans residues 1479 to 1497 (VFDISIMILICLNMVTMMV). At 1498–1505 (ETDDQSKY) the chain is on the extracellular side. Residues 1506-1529 (MTLVLSRINLVFIVLFTGEFLLKL) traverse the membrane as a helical segment. The Cytoplasmic segment spans residues 1530-1539 (ISLRYYYFTI). Residues 1540 to 1557 (GWNIFDFVVVILSIVGMF) form a helical membrane-spanning segment. Over 1558–1569 (LAELIEKYFVSP) the chain is Extracellular. Residues 1570–1592 (TLFRVIRLARIGRILRLIKGAKG) form a helical membrane-spanning segment. Residues 1593-1605 (IRTLLFALMMSLP) lie on the Cytoplasmic side of the membrane. A helical transmembrane segment spans residues 1606–1629 (ALFNIGLLLFLVMFIYAIFGMSNF). The Extracellular portion of the chain corresponds to 1630–1651 (AYVKKEAGIDDMFNFETFGNSM). Residues 1652 to 1664 (ICLFQITTSAGWD) constitute an intramembrane region (pore-forming). The Extracellular portion of the chain corresponds to 1665-1696 (GLLAPILNSAPPDCDPDAIHPGSSVKGDCGNP). The helical transmembrane segment at 1697–1722 (SVGIFFFVSYIIISFLVVVNMYIAVI) threads the bilayer. The Cytoplasmic portion of the chain corresponds to 1723–1947 (LENFSVATEE…PEKESKGKEV (225 aa)). Positions 1852 to 1881 (EEVSAAIIQRNYRCYLLKQRLKNISNTYDK) constitute an IQ domain. The interval 1901 to 1947 (LNGNSTPEKTDGSSSTTSPPSYDSVTKPDKEKFEKDKPEKESKGKEV) is disordered. Positions 1926–1947 (TKPDKEKFEKDKPEKESKGKEV) are enriched in basic and acidic residues.

It belongs to the sodium channel (TC 1.A.1.10) family. Nav1.3/SCN3A subfamily. As to quaternary structure, heterooligomer of an alpha subunit, SCN3A, and 1 to 3 regulatory beta subunits including SCN1B and SCN2B; disulfide-linked with some beta subunits like SCN2B. Interacts with NEDD4L; could regulate expression of SCN3A at the plasma membrane through ubiquitination-regulated endocytosis. Post-translationally, may be ubiquitinated by NEDD4L; which would promote its endocytosis. In terms of processing, phosphorylation at Ser-1453 in a highly conserved cytoplasmic loop slows inactivation of the channel and reduces peak sodium currents. As to expression, expressed in enterochromaffin cells in both colon and small bowel (at protein level). Expressed in pancreatic alpha and beta cells.

It localises to the cell membrane. The protein resides in the basal cell membrane. It catalyses the reaction Na(+)(in) = Na(+)(out). Functionally, pore-forming subunit of Nav1.3, a voltage-gated sodium (Nav) channel that directly mediates the depolarizing phase of action potentials in excitable membranes. Navs, also called VGSCs (voltage-gated sodium channels) or VDSCs (voltage-dependent sodium channels), operate by switching between closed and open conformations depending on the voltage difference across the membrane. In the open conformation they allow Na(+) ions to selectively pass through the pore, along their electrochemical gradient. The influx of Na+ ions provokes membrane depolarization, initiating the propagation of electrical signals throughout cells and tissues. In some secretory cell types, it also participates in cell excitability through membrane depolarization and regulates cells responsiveness to stimuli triggering secretion. For instance, it controls the release of serotonin/5-hydroxytryptamine by enterochromaffin cells and is required for both glucagon- and glucose-induced insulin secretion in pancreatic endocrine cells. The protein is Sodium channel protein type 3 subunit alpha of Mus musculus (Mouse).